We begin with the raw amino-acid sequence, 285 residues long: Pantothenate synthetase (285 aa).

Residue 30 to 37 (MGFLHEGH) participates in ATP binding. Catalysis depends on histidine 37, which acts as the Proton donor. Position 61 (glutamine 61) interacts with (R)-pantoate. Position 61 (glutamine 61) interacts with beta-alanine. 147–150 (GQKD) is an ATP binding site. Glutamine 153 is a (R)-pantoate binding site. ATP contacts are provided by residues valine 176 and 184-187 (KSSR).

It belongs to the pantothenate synthetase family. As to quaternary structure, homodimer.

It is found in the cytoplasm. The catalysed reaction is (R)-pantoate + beta-alanine + ATP = (R)-pantothenate + AMP + diphosphate + H(+). Its pathway is cofactor biosynthesis; (R)-pantothenate biosynthesis; (R)-pantothenate from (R)-pantoate and beta-alanine: step 1/1. In terms of biological role, catalyzes the condensation of pantoate with beta-alanine in an ATP-dependent reaction via a pantoyl-adenylate intermediate. The sequence is that of Pantothenate synthetase from Listeria monocytogenes serovar 1/2a (strain ATCC BAA-679 / EGD-e).